The primary structure comprises 831 residues: Thymine dioxygenase JBP1-B (831 aa).

The segment at 80-282 (VVGGVLLPGA…RLTCVCYYRA (203 aa)) is thymine dioxygenase. Residues H207, D209, and H257 each contribute to the Fe cation site. R273 contributes to the 2-oxoglutarate binding site. A DNA-binding JBP1 domain region spans residues 409–578 (LGGALKAAEE…IEEARRRGNA (170 aa)).

It belongs to the TET family. JBP1 subfamily. As to quaternary structure, monomer. Binds to DNA as a monomer. Fe(2+) serves as cofactor.

It is found in the nucleus. The enzyme catalyses thymine + 2-oxoglutarate + O2 = 5-hydroxymethyluracil + succinate + CO2. Its function is as follows. Dioxygenase that catalyzes the first step of DNA base J (beta-d-glucosyl-HOMedU) biosynthesis by converting thymine to 5-hydroxymethyluracil (HOMedU). DNA base J is a hypermodified thymidine residue found in the genome of kinetoplastid parasites, which is localized primarily to repetitive DNA, namely the telomeres, and is implicated in the regulation of antigenic variation. Also specifically binds to base J-containing DNA (J-DNA). Involved in propagation and maintenance of DNA base J synthesis initiated by JBP2 by specifically binding already synthesized DNA base J and propagating J synthesis. Thymine dioxygenase activity and J-DNA-binding are independent functions. This Trypanosoma cruzi (strain CL Brener) protein is Thymine dioxygenase JBP1-B (JBP1B).